Here is a 141-residue protein sequence, read N- to C-terminus: Nucleoside diphosphate kinase (141 aa).

K11, F59, R87, T93, R104, and N114 together coordinate ATP. The Pros-phosphohistidine intermediate role is filled by H117.

This sequence belongs to the NDK family. Homotetramer. The cofactor is Mg(2+).

Its subcellular location is the cytoplasm. It carries out the reaction a 2'-deoxyribonucleoside 5'-diphosphate + ATP = a 2'-deoxyribonucleoside 5'-triphosphate + ADP. The catalysed reaction is a ribonucleoside 5'-diphosphate + ATP = a ribonucleoside 5'-triphosphate + ADP. Major role in the synthesis of nucleoside triphosphates other than ATP. The ATP gamma phosphate is transferred to the NDP beta phosphate via a ping-pong mechanism, using a phosphorylated active-site intermediate. This is Nucleoside diphosphate kinase from Pseudomonas fluorescens (strain Pf0-1).